An 86-amino-acid chain; its full sequence is Parvalbumin beta 3 (86 aa).

A1 bears the N-acetylalanine mark. The 36-residue stretch at 35 to 70 (LSPEEVKKFFAIIDQDHSGFIEEEELKLFLQTFSAG) folds into the EF-hand domain. 6 residues coordinate Ca(2+): D48, D50, S52, F54, E56, and E59.

It belongs to the parvalbumin family.

In terms of biological role, in muscle, parvalbumin is thought to be involved in relaxation after contraction. It binds two calcium ions. In Merluccius hubbsi (Argentine hake), this protein is Parvalbumin beta 3.